Consider the following 544-residue polypeptide: Chaperonin GroEL (544 aa).

ATP contacts are provided by residues 30–33 (TLGP), Lys51, 87–91 (DGTTT), Gly415, 478–480 (NAA), and Asp494.

The protein belongs to the chaperonin (HSP60) family. As to quaternary structure, forms a cylinder of 14 subunits composed of two heptameric rings stacked back-to-back. Interacts with the co-chaperonin GroES.

The protein localises to the cytoplasm. It carries out the reaction ATP + H2O + a folded polypeptide = ADP + phosphate + an unfolded polypeptide.. Functionally, together with its co-chaperonin GroES, plays an essential role in assisting protein folding. The GroEL-GroES system forms a nano-cage that allows encapsulation of the non-native substrate proteins and provides a physical environment optimized to promote and accelerate protein folding. The sequence is that of Chaperonin GroEL from Geobacter sulfurreducens (strain ATCC 51573 / DSM 12127 / PCA).